We begin with the raw amino-acid sequence, 379 residues long: Glucose-1-phosphate adenylyltransferase (379 aa).

Residues G164, 179 to 180, and S190 each bind alpha-D-glucose 1-phosphate; that span reads EK.

It belongs to the bacterial/plant glucose-1-phosphate adenylyltransferase family. As to quaternary structure, homotetramer.

The catalysed reaction is alpha-D-glucose 1-phosphate + ATP + H(+) = ADP-alpha-D-glucose + diphosphate. Its pathway is glycan biosynthesis; glycogen biosynthesis. Involved in the biosynthesis of ADP-glucose, a building block required for the elongation reactions to produce glycogen. Catalyzes the reaction between ATP and alpha-D-glucose 1-phosphate (G1P) to produce pyrophosphate and ADP-Glc. The polypeptide is Glucose-1-phosphate adenylyltransferase (Lactiplantibacillus plantarum (strain ATCC BAA-793 / NCIMB 8826 / WCFS1) (Lactobacillus plantarum)).